The primary structure comprises 307 residues: Protease HtpX homolog (307 aa).

A helical transmembrane segment spans residues 16-36 (LFMGVGYLIGGAAGAMIALVV). His130 is a binding site for Zn(2+). The active site involves Glu131. His134 is a binding site for Zn(2+). Transmembrane regions (helical) follow at residues 145–165 (ITAT…FFGG) and 172–192 (GPGI…AMLV). A Zn(2+)-binding site is contributed by Glu201. Residues 278-307 (AGQSGSATPDPAPAPRGPWNGGAPRRGPWG) form a disordered region.

Belongs to the peptidase M48B family. The cofactor is Zn(2+).

The protein localises to the cell inner membrane. This Nitrobacter hamburgensis (strain DSM 10229 / NCIMB 13809 / X14) protein is Protease HtpX homolog.